Reading from the N-terminus, the 452-residue chain is Tubulin alpha-1 chain (452 aa).

A GTP-binding site is contributed by glutamine 11. Lysine 40 is subject to N6-acetyllysine. Glutamate 71, serine 140, glycine 144, threonine 145, threonine 179, asparagine 206, and asparagine 228 together coordinate GTP. Glutamate 71 serves as a coordination point for Mg(2+). The active site involves glutamate 254. The interval 433–452 (EEVGVDSADAEGEEEEGDEY) is disordered.

It belongs to the tubulin family. In terms of assembly, dimer of alpha and beta chains. A typical microtubule is a hollow water-filled tube with an outer diameter of 25 nm and an inner diameter of 15 nM. Alpha-beta heterodimers associate head-to-tail to form protofilaments running lengthwise along the microtubule wall with the beta-tubulin subunit facing the microtubule plus end conferring a structural polarity. Microtubules usually have 13 protofilaments but different protofilament numbers can be found in some organisms and specialized cells. It depends on Mg(2+) as a cofactor. Undergoes a tyrosination/detyrosination cycle, the cyclic removal and re-addition of a C-terminal tyrosine residue by the enzymes tubulin tyrosine carboxypeptidase (TTCP) and tubulin tyrosine ligase (TTL), respectively. Post-translationally, acetylation of alpha chains at Lys-40 stabilizes microtubules and affects affinity and processivity of microtubule motors. This modification has a role in multiple cellular functions, ranging from cell motility, cell cycle progression or cell differentiation to intracellular trafficking and signaling.

The protein localises to the cytoplasm. Its subcellular location is the cytoskeleton. The enzyme catalyses GTP + H2O = GDP + phosphate + H(+). In terms of biological role, tubulin is the major constituent of microtubules, a cylinder consisting of laterally associated linear protofilaments composed of alpha- and beta-tubulin heterodimers. Microtubules grow by the addition of GTP-tubulin dimers to the microtubule end, where a stabilizing cap forms. Below the cap, tubulin dimers are in GDP-bound state, owing to GTPase activity of alpha-tubulin. This chain is Tubulin alpha-1 chain, found in Paracentrotus lividus (Common sea urchin).